The following is a 200-amino-acid chain: Probable GTP-binding protein EngB (200 aa).

One can recognise an EngB-type G domain in the interval 25–199 (SGYEVAFAGR…ISLLDRWYEW (175 aa)). GTP-binding positions include 33-40 (GRSNAGKS), 60-64 (GRTQL), 78-81 (DLPG), 145-148 (TKAD), and 178-180 (FSS). Mg(2+) is bound by residues serine 40 and threonine 62.

Belongs to the TRAFAC class TrmE-Era-EngA-EngB-Septin-like GTPase superfamily. EngB GTPase family. Mg(2+) serves as cofactor.

Necessary for normal cell division and for the maintenance of normal septation. The protein is Probable GTP-binding protein EngB of Legionella pneumophila (strain Corby).